The chain runs to 284 residues: Diaminopimelate epimerase (284 aa).

3 residues coordinate substrate: N20, Q53, and N73. C82 (proton donor) is an active-site residue. Substrate-binding positions include 83–84 (GN), N167, N200, and 218–219 (ER). C227 serves as the catalytic Proton acceptor. 228 to 229 (GS) is a substrate binding site.

It belongs to the diaminopimelate epimerase family. As to quaternary structure, homodimer.

Its subcellular location is the cytoplasm. The catalysed reaction is (2S,6S)-2,6-diaminopimelate = meso-2,6-diaminopimelate. Its pathway is amino-acid biosynthesis; L-lysine biosynthesis via DAP pathway; DL-2,6-diaminopimelate from LL-2,6-diaminopimelate: step 1/1. Catalyzes the stereoinversion of LL-2,6-diaminopimelate (L,L-DAP) to meso-diaminopimelate (meso-DAP), a precursor of L-lysine and an essential component of the bacterial peptidoglycan. This Xanthomonas oryzae pv. oryzae (strain MAFF 311018) protein is Diaminopimelate epimerase.